The sequence spans 340 residues: GTP 3',8-cyclase (340 aa).

In terms of domain architecture, Radical SAM core spans Lys8–Glu227. Arg17 is a GTP binding site. [4Fe-4S] cluster contacts are provided by Cys24 and Cys28. Tyr30 is a binding site for S-adenosyl-L-methionine. Cys31 serves as a coordination point for [4Fe-4S] cluster. Residue Arg71 coordinates GTP. Residue Gly75 participates in S-adenosyl-L-methionine binding. Thr102 provides a ligand contact to GTP. Ser126 is a binding site for S-adenosyl-L-methionine. Residue Lys163 participates in GTP binding. Residue Met197 coordinates S-adenosyl-L-methionine. [4Fe-4S] cluster is bound by residues Cys261 and Cys264. Arg266–Arg268 serves as a coordination point for GTP. Cys278 contributes to the [4Fe-4S] cluster binding site.

The protein belongs to the radical SAM superfamily. MoaA family. Monomer and homodimer. The cofactor is [4Fe-4S] cluster.

The enzyme catalyses GTP + AH2 + S-adenosyl-L-methionine = (8S)-3',8-cyclo-7,8-dihydroguanosine 5'-triphosphate + 5'-deoxyadenosine + L-methionine + A + H(+). Its pathway is cofactor biosynthesis; molybdopterin biosynthesis. Catalyzes the cyclization of GTP to (8S)-3',8-cyclo-7,8-dihydroguanosine 5'-triphosphate. The chain is GTP 3',8-cyclase from Staphylococcus saprophyticus subsp. saprophyticus (strain ATCC 15305 / DSM 20229 / NCIMB 8711 / NCTC 7292 / S-41).